The sequence spans 473 residues: Photosystem II CP43 reaction center protein (473 aa).

Positions 1–14 are excised as a propeptide; sequence MKTLYSLRRFYHVE. T15 carries the N-acetylthreonine modification. Position 15 is a phosphothreonine (T15). The next 5 helical transmembrane spans lie at 69–93, 134–155, 178–200, 255–275, and 291–312; these read LFEV…PHLA, LIGP…RDKN, KAIY…RIID, KPFA…LSYS, and WYNN…ASQS. E367 is a binding site for [CaMn4O5] cluster. A helical membrane pass occupies residues 447–471; the sequence is RARAAAAGFEKGINRENEPVLTLRP.

The protein belongs to the PsbB/PsbC family. PsbC subfamily. PSII is composed of 1 copy each of membrane proteins PsbA, PsbB, PsbC, PsbD, PsbE, PsbF, PsbH, PsbI, PsbJ, PsbK, PsbL, PsbM, PsbT, PsbX, PsbY, PsbZ, Psb30/Ycf12, at least 3 peripheral proteins of the oxygen-evolving complex and a large number of cofactors. It forms dimeric complexes. Requires Binds multiple chlorophylls and provides some of the ligands for the Ca-4Mn-5O cluster of the oxygen-evolving complex. It may also provide a ligand for a Cl- that is required for oxygen evolution. PSII binds additional chlorophylls, carotenoids and specific lipids. as cofactor.

It localises to the plastid. It is found in the chloroplast thylakoid membrane. Functionally, one of the components of the core complex of photosystem II (PSII). It binds chlorophyll and helps catalyze the primary light-induced photochemical processes of PSII. PSII is a light-driven water:plastoquinone oxidoreductase, using light energy to abstract electrons from H(2)O, generating O(2) and a proton gradient subsequently used for ATP formation. This is Photosystem II CP43 reaction center protein from Guillardia theta (Cryptophyte).